Reading from the N-terminus, the 156-residue chain is V-type proton ATPase 16 kDa proteolipid subunit c (156 aa).

At 1 to 7 (MAENPIY) the chain is on the lumenal side. Residues 8–30 (GPFFGVMGAASAIIFSALGAAYG) form a helical membrane-spanning segment. At 31-52 (TAKSGTGIAAMSVMRPELIMKS) the chain is on the cytoplasmic side. The chain crosses the membrane as a helical span at residues 53-73 (IIPVVMAGIIAIYGLVVAVLI). Topologically, residues 74-92 (AGSLDAPSNNYTLYKGFIH) are lumenal. Residues 93–114 (LGAGLAVGFSGLAAGFAIGIVG) traverse the membrane as a helical segment. Topologically, residues 115–126 (DAGVRGTAQQPR) are cytoplasmic. A helical membrane pass occupies residues 127-152 (LFVGMILILIFAEVLGLYGLIVAIYL). Residues 153 to 156 (YTKQ) lie on the Lumenal side of the membrane.

The protein belongs to the V-ATPase proteolipid subunit family. In terms of assembly, V-ATPase is a heteromultimeric enzyme made up of two complexes: the ATP-hydrolytic V1 complex and the proton translocation V0 complex. The V1 complex consists of three catalytic AB heterodimers that form a heterohexamer, three peripheral stalks each consisting of EG heterodimers, one central rotor including subunits D and F, and the regulatory subunits C and H. The proton translocation complex V0 consists of the proton transport subunit a, a ring of proteolipid subunits c9c'', rotary subunit d, subunits e and f, and the accessory subunits VhaAC45 and ATP6AP2.

The protein resides in the membrane. In terms of biological role, proton-conducting pore forming subunit of the V0 complex of vacuolar(H+)-ATPase (V-ATPase), a multisubunit enzyme composed of a peripheral complex (V1) that hydrolyzes ATP and a membrane integral complex (V0) that translocates protons. V-ATPase is responsible for acidifying and maintaining the pH of intracellular compartments and in some cell types, is targeted to the plasma membrane, where it is responsible for acidifying the extracellular environment. The polypeptide is V-type proton ATPase 16 kDa proteolipid subunit c (VHA16) (Heliothis virescens (Tobacco budworm moth)).